A 256-amino-acid chain; its full sequence is Inositol-1-monophosphatase (256 aa).

The Mg(2+) site is built by E60, D77, L79, and D80. E60 lines the substrate pocket. Substrate contacts are provided by residues 79–82, R178, and D207; that span reads LDGT. D207 serves as a coordination point for Mg(2+).

The protein belongs to the inositol monophosphatase superfamily. Mg(2+) is required as a cofactor.

It catalyses the reaction a myo-inositol phosphate + H2O = myo-inositol + phosphate. The sequence is that of Inositol-1-monophosphatase (suhB) from Caulobacter vibrioides (strain ATCC 19089 / CIP 103742 / CB 15) (Caulobacter crescentus).